Reading from the N-terminus, the 451-residue chain is MNTIFKQKNTHPFSNAANRLDRLPISRVHFQVLTALGIVYFFDLADLFTLSNVAPALIEHWGIPLSTIANVTAASFLGMFLGASLGGRLSDRIGRKKALNLFVFVFSIASLCNAAAWDIPSLMTFRFLTGFGVAAAMVITNSYLAEFFPSSVRGKYISFCAMIGLIGVPITNIVSAFVIPLGSWGWRLVFVWGAVGLIYFFFIHRLEESPRWHENRGEYAKADAILTRIEEQVEKEKGPLPAASQPKVSETVKQNAGYAGLLKGRNLKITIVLSAVWIFETFGFYGFASWVPSLLKSNGVTMENTLWYNVLHSVGAPLGALLGSMISERFQRKWILAASAFLTAIAGLLYGMTFIPIMIIVFGFIVNITERVFTSNLYAYTSEPYPTEYRSSGSGLAYGLGRFSNIFGSLLVGFIAVQLGYISVFLFIGGCWLACSLLLIFFGPNTNAKQI.

Over 1 to 29 (MNTIFKQKNTHPFSNAANRLDRLPISRVH) the chain is Cytoplasmic. The helical transmembrane segment at 30-50 (FQVLTALGIVYFFDLADLFTL) threads the bilayer. Residues 51-60 (SNVAPALIEH) are Extracellular-facing. The helical transmembrane segment at 61–81 (WGIPLSTIANVTAASFLGMFL) threads the bilayer. The Cytoplasmic segment spans residues 82 to 97 (GASLGGRLSDRIGRKK). Residues 98–118 (ALNLFVFVFSIASLCNAAAWD) traverse the membrane as a helical segment. The Extracellular portion of the chain corresponds to 119-124 (IPSLMT). Residues 125 to 145 (FRFLTGFGVAAAMVITNSYLA) form a helical membrane-spanning segment. The Cytoplasmic segment spans residues 146–157 (EFFPSSVRGKYI). A helical transmembrane segment spans residues 158-178 (SFCAMIGLIGVPITNIVSAFV). Residues 179-182 (IPLG) lie on the Extracellular side of the membrane. A helical transmembrane segment spans residues 183–203 (SWGWRLVFVWGAVGLIYFFFI). Over 204-270 (HRLEESPRWH…LLKGRNLKIT (67 aa)) the chain is Cytoplasmic. The chain crosses the membrane as a helical span at residues 271–291 (IVLSAVWIFETFGFYGFASWV). Residues 292 to 305 (PSLLKSNGVTMENT) lie on the Extracellular side of the membrane. The chain crosses the membrane as a helical span at residues 306–326 (LWYNVLHSVGAPLGALLGSMI). At 327-333 (SERFQRK) the chain is on the cytoplasmic side. The helical transmembrane segment at 334-354 (WILAASAFLTAIAGLLYGMTF) threads the bilayer. At 355–357 (IPI) the chain is on the extracellular side. A helical transmembrane segment spans residues 358-378 (MIIVFGFIVNITERVFTSNLY). Residues 379–396 (AYTSEPYPTEYRSSGSGL) are Cytoplasmic-facing. Residues 397–417 (AYGLGRFSNIFGSLLVGFIAV) form a helical membrane-spanning segment. The Extracellular segment spans residues 418–421 (QLGY). A helical membrane pass occupies residues 422–442 (ISVFLFIGGCWLACSLLLIFF). Residues 443-451 (GPNTNAKQI) lie on the Cytoplasmic side of the membrane.

The protein belongs to the major facilitator superfamily. Sugar transporter (TC 2.A.1.1) family.

It is found in the cell membrane. The polypeptide is Putative metabolite transport protein YyaJ (yyaJ) (Bacillus subtilis (strain 168)).